The sequence spans 169 residues: Peptide deformylase 1 (169 aa).

Residues cysteine 91 and histidine 133 each contribute to the Fe cation site. Glutamate 134 is a catalytic residue. Position 137 (histidine 137) interacts with Fe cation.

This sequence belongs to the polypeptide deformylase family. Fe(2+) is required as a cofactor.

The catalysed reaction is N-terminal N-formyl-L-methionyl-[peptide] + H2O = N-terminal L-methionyl-[peptide] + formate. Removes the formyl group from the N-terminal Met of newly synthesized proteins. Requires at least a dipeptide for an efficient rate of reaction. N-terminal L-methionine is a prerequisite for activity but the enzyme has broad specificity at other positions. The polypeptide is Peptide deformylase 1 (Vibrio cholerae serotype O1 (strain ATCC 39315 / El Tor Inaba N16961)).